A 529-amino-acid chain; its full sequence is uncharacterized protein (529 aa).

Residues 178–186 (TSGTTGQPK), Asp-401, Arg-416, and Lys-510 contribute to the ATP site.

The protein belongs to the ATP-dependent AMP-binding enzyme family.

This is an uncharacterized protein from Bacillus subtilis (strain 168).